We begin with the raw amino-acid sequence, 229 residues long: RNA pyrophosphohydrolase (229 aa).

The 144-residue stretch at 6–149 (GFRPNVGIIL…KRGVYEMALT (144 aa)) folds into the Nudix hydrolase domain. The Nudix box motif lies at 38 to 59 (GGIDRGETPEQAMFRELHEEVG). Residues 168–229 (SGMRPREAHE…QVLHPDPGKA (62 aa)) form a disordered region.

The protein belongs to the Nudix hydrolase family. RppH subfamily. Requires a divalent metal cation as cofactor.

Functionally, accelerates the degradation of transcripts by removing pyrophosphate from the 5'-end of triphosphorylated RNA, leading to a more labile monophosphorylated state that can stimulate subsequent ribonuclease cleavage. In Delftia acidovorans (strain DSM 14801 / SPH-1), this protein is RNA pyrophosphohydrolase.